The chain runs to 345 residues: tRNA-dihydrouridine(20/20a) synthase (345 aa).

FMN-binding positions include Pro26–Leu28 and Gln78. The active-site Proton donor is Cys108. FMN is bound by residues Lys147, His180, Asn220 to Gly222, and Gly242 to Arg243.

Belongs to the Dus family. DusA subfamily. FMN serves as cofactor.

The enzyme catalyses 5,6-dihydrouridine(20) in tRNA + NADP(+) = uridine(20) in tRNA + NADPH + H(+). The catalysed reaction is 5,6-dihydrouridine(20) in tRNA + NAD(+) = uridine(20) in tRNA + NADH + H(+). It catalyses the reaction 5,6-dihydrouridine(20a) in tRNA + NADP(+) = uridine(20a) in tRNA + NADPH + H(+). It carries out the reaction 5,6-dihydrouridine(20a) in tRNA + NAD(+) = uridine(20a) in tRNA + NADH + H(+). In terms of biological role, catalyzes the synthesis of 5,6-dihydrouridine (D), a modified base found in the D-loop of most tRNAs, via the reduction of the C5-C6 double bond in target uridines. Specifically modifies U20 and U20a in tRNAs. The protein is tRNA-dihydrouridine(20/20a) synthase of Yersinia pestis.